The primary structure comprises 293 residues: G1/S-specific cyclin-D3 (293 aa).

Positions 27–152 constitute a Cyclin N-terminal domain; it reads VLQSLLRLEE…LVLGKLKWDL (126 aa). Residues 257–293 are disordered; it reads REAAQTAPSPVPKAPGGSSSQGPSQTSTPTDVTAIHL. A phosphoserine mark is found at S265 and S280. Over residues 271–286 the composition is skewed to low complexity; it reads PGGSSSQGPSQTSTPT. T284 is modified (phosphothreonine).

The protein belongs to the cyclin family. Cyclin D subfamily. Interacts with the CDK4 and CDK6 protein kinases to form a serine/threonine kinase holoenzyme complex. The cyclin subunit imparts substrate specificity to the complex. Interacts with ATF5. Interacts with EIF3K. Component of the ternary complex cyclin D/CDK4/CDKN1B required for nuclear translocation and modulation of CDK4-mediated kinase activity. Can form similar complexes with either CDKN1A or CDKN2A. Post-translationally, phosphorylation at Thr-284 by MAP kinases is required for ubiquitination and degradation by the DCX(AMBRA1) complex. In terms of processing, ubiquitinated by the DCX(AMBRA1) complex during the transition from G1 to S cell phase, leading to its degradation: ubiquitination is dependent on Thr-284 phosphorylation. The DCX(AMBRA1) complex represents the major regulator of CCND3 stability during the G1/S transition. Polyubiquitinated by the SCF(FBXL2) complex, leading to proteasomal degradation.

It localises to the nucleus. Its subcellular location is the cytoplasm. In terms of biological role, regulatory component of the cyclin D3-CDK4 (DC) complex that phosphorylates and inhibits members of the retinoblastoma (RB) protein family including RB1 and regulates the cell-cycle during G(1)/S transition. Phosphorylation of RB1 allows dissociation of the transcription factor E2F from the RB/E2F complex and the subsequent transcription of E2F target genes which are responsible for the progression through the G(1) phase. Hypophosphorylates RB1 in early G(1) phase. Cyclin D-CDK4 complexes are major integrators of various mitogenenic and antimitogenic signals. Component of the ternary complex, cyclin D3/CDK4/CDKN1B, required for nuclear translocation and activity of the cyclin D-CDK4 complex. Shows transcriptional coactivator activity with ATF5 independently of CDK4. The protein is G1/S-specific cyclin-D3 of Rattus norvegicus (Rat).